We begin with the raw amino-acid sequence, 666 residues long: Nuclear distribution protein nudE homolog 1 (666 aa).

The stretch at 14–195 (EEEIAHYREK…KDQLARAIAT (182 aa)) forms a coiled coil. 4 disordered regions span residues 40–64 (EFQQSSKELEDEMEQELAANDKQQA), 220–310 (DDIN…SGIP), 369–388 (KRVTSTTSTTSSTTTAPAPH), and 397–666 (DHNT…KVKK). Polar residues predominate over residues 251–274 (RSGTMSSIPVASPSTKRFSQQIPH). Composition is skewed to low complexity over residues 275–287 (SPSFSTLSRSTTS) and 372–383 (TSTTSTTSSTTT). Polar residues predominate over residues 400-410 (TTPTAQSQQFP). Low complexity-rich tracts occupy residues 449–465 (PTFRSSSTTSNRSLPSR), 473–485 (ASGSARSTTSGTA), and 536–554 (SATPTSGFSSFSASASTSN). Polar residues-rich tracts occupy residues 587–599 (RQSLSGAGPTPTT) and 614–638 (SSLSNMDKPSLMSASSGSRTPSGRP).

Belongs to the nudE family. Self-associates. Interacts with PAC1.

The protein localises to the cytoplasm. The protein resides in the cytoskeleton. Functionally, required for nuclear migration. The sequence is that of Nuclear distribution protein nudE homolog 1 (NDE1) from Cryptococcus neoformans var. neoformans serotype D (strain JEC21 / ATCC MYA-565) (Filobasidiella neoformans).